The following is a 407-amino-acid chain: Putative two-component response regulator ARR19 (407 aa).

The region spanning 35–150 (NVLVVDTNFT…VMANIWQHIV (116 aa)) is the Response regulatory domain. Residue aspartate 86 is modified to 4-aspartylphosphate. Positions 214–217 (RKPR) match the Nuclear localization signal motif. The segment at residues 217–271 (RMTWTEELHQKFLEAIEIIGGIEKANPKVLVECLQEMRIEGITRSNVASHLQKHR) is a DNA-binding region (myb-like GARP).

This sequence belongs to the ARR family. Type-B subfamily. Binds the target DNA as a monomer. Post-translationally, two-component system major event consists of a His-to-Asp phosphorelay between a sensor histidine kinase (HK) and a response regulator (RR). In plants, the His-to-Asp phosphorelay involves an additional intermediate named Histidine-containing phosphotransfer protein (HPt). This multistep phosphorelay consists of a His-Asp-His-Asp sequential transfer of a phosphate group between first a His and an Asp of the HK protein, followed by the transfer to a conserved His of the HPt protein and finally the transfer to an Asp in the receiver domain of the RR protein. In terms of tissue distribution, detected in trichomes and siliques.

The protein localises to the nucleus. Its function is as follows. Putative transcriptional activator that binds specifically to the DNA sequence 5'-[AG]GATT-3'. Functions as a response regulator involved in His-to-Asp phosphorelay signal transduction system. Phosphorylation of the Asp residue in the receiver domain activates the ability of the protein to promote the transcription of target genes. Could directly activate some type-A response regulators in response to cytokinins. The protein is Putative two-component response regulator ARR19 (ARR19) of Arabidopsis thaliana (Mouse-ear cress).